We begin with the raw amino-acid sequence, 203 residues long: Transcriptional regulator GfcR (203 aa).

The protein belongs to the purine/pyrimidine phosphoribosyltransferase family. GfcR subfamily.

In Methanococcoides burtonii (strain DSM 6242 / NBRC 107633 / OCM 468 / ACE-M), this protein is Transcriptional regulator GfcR.